The sequence spans 127 residues: Fluoride-specific ion channel FluC (127 aa).

The next 4 helical transmembrane spans lie at 4–24, 34–54, 65–85, and 97–117; these read IIYI…TQIA, FPFP…IGFF, FELR…FSTL, and FYGI…LAVL. Na(+) contacts are provided by glycine 77 and threonine 80.

It belongs to the fluoride channel Fluc/FEX (TC 1.A.43) family.

It localises to the cell inner membrane. It catalyses the reaction fluoride(in) = fluoride(out). Na(+) is not transported, but it plays an essential structural role and its presence is essential for fluoride channel function. Functionally, fluoride-specific ion channel. Important for reducing fluoride concentration in the cell, thus reducing its toxicity. This chain is Fluoride-specific ion channel FluC, found in Bacteroides fragilis (strain ATCC 25285 / DSM 2151 / CCUG 4856 / JCM 11019 / LMG 10263 / NCTC 9343 / Onslow / VPI 2553 / EN-2).